A 295-amino-acid polypeptide reads, in one-letter code: G1/S-specific cyclin-D1 (295 aa).

One can recognise a Cyclin N-terminal domain in the interval 28–152 (LRAMLKAEET…LLVNKLKWNL (125 aa)). The tract at residues 264–295 (QQSLDPKAAEEEEEEEEADLACTPTDVRDVNI) is disordered. K270 is covalently cross-linked (Glycyl lysine isopeptide (Lys-Gly) (interchain with G-Cter in ubiquitin)). Positions 273–282 (EEEEEEEEAD) are enriched in acidic residues. T286 is modified (phosphothreonine).

This sequence belongs to the cyclin family. Cyclin D subfamily. As to quaternary structure, interacts with either CDK4 or CDK6 protein kinase to form a serine/threonine kinase holoenzyme complex. The cyclin subunit imparts substrate specificity to the complex. Component of the ternary complex CCND1/CDK4/CDKN1B required for nuclear translocation and modulation of CDK4-mediated kinase activity. Interacts directly with CDKN1B. Can form similar complexes with either CDKN1A or CDKN2A. Interacts with UHRF2; the interaction ubiquitinates CCND1 and appears to occur independently of phosphorylation. Interacts with USP2. Interacts (via cyclin N-terminal domain) with INSM1 (via N-terminal region); the interaction competes with the binding of CCND1 to CDK4 during cell cycle progression and inhibits CDK4 activity. Interacts with CDK4; the interaction is prevented with the binding of CCND1 to INSM1 during cell cycle progression. Post-translationally, phosphorylation at Thr-286 by MAP kinases is required for ubiquitination and degradation by the DCX(AMBRA1) complex. It also plays an essential role for recognition by the FBXO31 component of SCF (SKP1-cullin-F-box) protein ligase complex following DNA damage. In terms of processing, ubiquitinated at Lys-270 by the DCX(AMBRA1) complex during the transition from G1 to S cell phase, leading to its degradation: ubiquitination is dependent on Thr-286 phosphorylation. The DCX(AMBRA1) complex represents the major regulator of CCND1 stability during the G1/S transition. Also ubiquitinated by the SCF(FBXO4) and Cul7-RING(FBXW8) ubiquitin-protein ligase complexes. Following DNA damage it is ubiquitinated by the SCF(FBXO31) protein ligase complex. SCF(FBXO31) ubiquitination is dependent on Thr-286 phosphorylation. Ubiquitinated also by UHRF2 apparently in a phosphorylation-independent manner. Ubiquitination leads to its degradation and G1 arrest. Deubiquitinated by USP2; leading to its stabilization.

It is found in the nucleus. The protein localises to the cytoplasm. Its subcellular location is the nucleus membrane. Functionally, regulatory component of the cyclin D1-CDK4 (DC) complex that phosphorylates and inhibits members of the retinoblastoma (RB) protein family including RB1 and regulates the cell-cycle during G(1)/S transition. Phosphorylation of RB1 allows dissociation of the transcription factor E2F from the RB/E2F complex and the subsequent transcription of E2F target genes which are responsible for the progression through the G(1) phase. Hypophosphorylates RB1 in early G(1) phase. Cyclin D-CDK4 complexes are major integrators of various mitogenenic and antimitogenic signals. Also a substrate for SMAD3, phosphorylating SMAD3 in a cell-cycle-dependent manner and repressing its transcriptional activity. Component of the ternary complex, cyclin D1/CDK4/CDKN1B, required for nuclear translocation and activity of the cyclin D-CDK4 complex. Exhibits transcriptional corepressor activity with INSM1 on the NEUROD1 and INS promoters in a cell cycle-independent manner. This is G1/S-specific cyclin-D1 (CCND1) from Canis lupus familiaris (Dog).